The sequence spans 235 residues: MRPLAGGLLKVVFVVFASLCAWYSGYLLAELIPDAPLSSAAYSIRSIGERPVLKAPVPKRQKCDHWTPCPSDTYAYRLLSGGGRSKYAKICFEDNLLMGEQLGNVARGINIAIVNYVTGNVTATRCFDMYEGDNSGPMTKFIQSAAPKSLLFMVTYDDGSTRLNNDAKNAIEALGSKEIRNMKFRSSWVFIAAKGLELPSEIQREKINHSDAKNNRYSGWPAEIQIEGCIPKERS.

Positions 1–29 (MRPLAGGLLKVVFVVFASLCAWYSGYLLA) are cleaved as a signal peptide. Intrachain disulfides connect cysteine 63–cysteine 91 and cysteine 69–cysteine 229. A GG-type lectin domain is found at 72–233 (DTYAYRLLSG…IQIEGCIPKE (162 aa)). Asparagine 120 and asparagine 208 each carry an N-linked (GlcNAc...) asparagine glycan.

The protein belongs to the FAM3 family. 2 N-termini have been observed in the mature protein: the first at Glu-30, resulting from signal peptide cleavage, the second at Ser-46. Post-translationally, O-glycosylated. Highly expressed in the pancreas. Also found in the colon, kidney, prostate, small intestine and testis.

The protein localises to the secreted. Functionally, induces apoptosis of alpha and beta cells in a dose- and time-dependent manner. This Homo sapiens (Human) protein is Protein FAM3B (FAM3B).